A 181-amino-acid chain; its full sequence is ADP-ribosylation factor 1-like 2 (181 aa).

Residue Gly-2 is the site of N-myristoyl glycine attachment. Residues 3-16 (NVFGSLFKGLFGKR) are important for the stable binding to the membranes. GTP is bound by residues 24-32 (GLDAAGKTT), 126-129 (NKQD), and Ala-160.

It belongs to the small GTPase superfamily. Arf family. Expressed in hypodermis, intestine, spermatheca, uterus, gonadal sheath, vulva cells, pharynx muscle, body wall muscle, head neurons, ventral nerve cord.

It is found in the golgi apparatus membrane. The catalysed reaction is GTP + H2O = GDP + phosphate + H(+). Alternates between an inactive GDP-bound form and an active GTP-bound form. Activated by a guanine nucleotide-exchange factor (GEF) and inactivated by GTPase-activating protein (GAP). Functionally, small GTPase involved in protein trafficking between different compartments. Modulates vesicle budding and uncoating within the Golgi complex. In its GTP-bound form, triggers the recruitment of coatomer proteins to the Golgi membrane. The hydrolysis of ARF1-bound GTP, which is mediated by ARFGAPs proteins, is required for dissociation of coat proteins from Golgi membranes and vesicles. Involved in endoplasmic reticulum dynamics during embryogenesis. Also required for adult germline function. Plays a role in cell shedding during embryogenesis probably by promoting the endocytosis of cell adhesion molecules. During neurogenesis, involved in cell autonomous Q.p neuroblast asymmetric divisions that generate one precursor cell and one apoptotic cell, probably by controlling endocytosis. Plays a role in maintaining mitochondrial morphology. This is ADP-ribosylation factor 1-like 2 from Caenorhabditis elegans.